Here is a 103-residue protein sequence, read N- to C-terminus: Integration host factor subunit beta (103 aa).

The protein belongs to the bacterial histone-like protein family. As to quaternary structure, heterodimer of an alpha and a beta chain.

Functionally, this protein is one of the two subunits of integration host factor, a specific DNA-binding protein that functions in genetic recombination as well as in transcriptional and translational control. The protein is Integration host factor subunit beta of Sinorhizobium medicae (strain WSM419) (Ensifer medicae).